The sequence spans 393 residues: Staphopain B (393 aa).

An N-terminal signal peptide occupies residues 1-36 (MNSSYKSRVFNIISIIMVSMLILSLGAFANNNKAKA). The propeptide occupies 37 to 219 (DSHSKQLEIN…KVEENEAIQE (183 aa)). Residues cysteine 243, histidine 340, and asparagine 360 contribute to the active site.

This sequence belongs to the peptidase C47 family. In the cytoplasm, prematurely activated/folded SspB forms a stable non-covalent complex with SspC. Proteolytically cleaved by staphylococcal serine protease (SspA).

Its subcellular location is the secreted. With respect to regulation, prematurely activated/folded staphopain B is inhibited by staphostatin B (SspC), which is probably required to protect staphylococcal cytoplasmic proteins from degradation by SspB. Cysteine protease that plays an important role in the inhibition of host innate immune response. Degrades host elastin, fibrogen, fibronectin and kininogen. Blocks phagocytosis of opsonised S.aureus by neutrophils and monocytes by inducing their death in a proteolytic activity-dependent manner. Decreases surface expression of the 'don't eat me' signal CD31 on neutrophils. Cleaves host galectin-3/LGALS3, thereby inhibiting the neutrophil-activating ability of the lectin. The polypeptide is Staphopain B (sspB) (Staphylococcus aureus (strain MSSA476)).